The following is a 270-amino-acid chain: Phthiotriol/phenolphthiotriol dimycocerosates methyltransferase (270 aa).

It belongs to the methyltransferase superfamily. Phthiotriol/phenolphthiotriol dimycocerosates methyltransferase family.

Functionally, catalyzes the methylation of the lipid moiety of the intermediate compounds phthiotriol and glycosylated phenolphthiotriol dimycoserosates to form phthiocerol dimycocerosates (DIM A) and glycosylated phenolphthiocerol dimycocerosates (PGL). This is Phthiotriol/phenolphthiotriol dimycocerosates methyltransferase from Mycobacterium leprae (strain TN).